Here is a 155-residue protein sequence, read N- to C-terminus: Lipoprotein signal peptidase (155 aa).

4 helical membrane passes run 7–27, 39–59, 63–83, and 96–116; these read WFWI…YITV, IIPG…FSAF, VGWL…FAYF, and GFIL…GYVV. Residues aspartate 117 and aspartate 133 contribute to the active site. The chain crosses the membrane as a helical span at residues 126–146; that stretch reads FPVFNLADVFINIGIICLLIS.

It belongs to the peptidase A8 family.

The protein resides in the cell inner membrane. The enzyme catalyses Release of signal peptides from bacterial membrane prolipoproteins. Hydrolyzes -Xaa-Yaa-Zaa-|-(S,diacylglyceryl)Cys-, in which Xaa is hydrophobic (preferably Leu), and Yaa (Ala or Ser) and Zaa (Gly or Ala) have small, neutral side chains.. The protein operates within protein modification; lipoprotein biosynthesis (signal peptide cleavage). Functionally, this protein specifically catalyzes the removal of signal peptides from prolipoproteins. This is Lipoprotein signal peptidase from Microcystis aeruginosa (strain NIES-843 / IAM M-2473).